The chain runs to 331 residues: tRNA N6-adenosine threonylcarbamoyltransferase (331 aa).

Fe cation-binding residues include His109, His113, and Tyr130. Residues 130–134, Asp162, Asp183, and Ser262 contribute to the substrate site; that span reads YLSGG. Asp290 serves as a coordination point for Fe cation.

Belongs to the KAE1 / TsaD family. Fe(2+) is required as a cofactor.

It localises to the cytoplasm. The catalysed reaction is L-threonylcarbamoyladenylate + adenosine(37) in tRNA = N(6)-L-threonylcarbamoyladenosine(37) in tRNA + AMP + H(+). Its function is as follows. Required for the formation of a threonylcarbamoyl group on adenosine at position 37 (t(6)A37) in tRNAs that read codons beginning with adenine. Is probably involved in the transfer of the threonylcarbamoyl moiety of threonylcarbamoyl-AMP (TC-AMP) to the N6 group of A37. This Saccharolobus islandicus (strain M.16.27) (Sulfolobus islandicus) protein is tRNA N6-adenosine threonylcarbamoyltransferase.